A 216-amino-acid chain; its full sequence is Uracil phosphoribosyltransferase (216 aa).

5-phospho-alpha-D-ribose 1-diphosphate contacts are provided by residues R85, R110, and 136–144 (DPMLATGNS). Residues I201 and 206–208 (GDA) each bind uracil. A 5-phospho-alpha-D-ribose 1-diphosphate-binding site is contributed by D207.

This sequence belongs to the UPRTase family. Mg(2+) is required as a cofactor.

It carries out the reaction UMP + diphosphate = 5-phospho-alpha-D-ribose 1-diphosphate + uracil. The protein operates within pyrimidine metabolism; UMP biosynthesis via salvage pathway; UMP from uracil: step 1/1. With respect to regulation, allosterically activated by GTP. Functionally, catalyzes the conversion of uracil and 5-phospho-alpha-D-ribose 1-diphosphate (PRPP) to UMP and diphosphate. The sequence is that of Uracil phosphoribosyltransferase from Rhodospirillum centenum (strain ATCC 51521 / SW).